The sequence spans 459 residues: Exodeoxyribonuclease 7 large subunit (459 aa).

Belongs to the XseA family. As to quaternary structure, heterooligomer composed of large and small subunits.

Its subcellular location is the cytoplasm. The catalysed reaction is Exonucleolytic cleavage in either 5'- to 3'- or 3'- to 5'-direction to yield nucleoside 5'-phosphates.. Functionally, bidirectionally degrades single-stranded DNA into large acid-insoluble oligonucleotides, which are then degraded further into small acid-soluble oligonucleotides. This Pseudomonas savastanoi pv. phaseolicola (strain 1448A / Race 6) (Pseudomonas syringae pv. phaseolicola (strain 1448A / Race 6)) protein is Exodeoxyribonuclease 7 large subunit.